A 97-amino-acid polypeptide reads, in one-letter code: Co-chaperonin GroES (97 aa).

This sequence belongs to the GroES chaperonin family. As to quaternary structure, heptamer of 7 subunits arranged in a ring. Interacts with the chaperonin GroEL.

Its subcellular location is the cytoplasm. Functionally, together with the chaperonin GroEL, plays an essential role in assisting protein folding. The GroEL-GroES system forms a nano-cage that allows encapsulation of the non-native substrate proteins and provides a physical environment optimized to promote and accelerate protein folding. GroES binds to the apical surface of the GroEL ring, thereby capping the opening of the GroEL channel. This is Co-chaperonin GroES from Edwardsiella ictaluri (strain 93-146).